The sequence spans 191 residues: Adenylate kinase (191 aa).

12-17 (GSGKTT) contacts ATP. An NMP region spans residues 34–63 (STGDLLRAESAKKTERGLLIEKFTSQGELV). Residues Thr35, Arg40, 61–63 (ELV), 88–91 (GYPR), and Gln95 each bind AMP. Positions 130 to 136 (GRSRGAD) are LID. Arg131 provides a ligand contact to ATP. 2 residues coordinate AMP: Arg133 and Arg145. Residue Arg173 coordinates ATP.

Belongs to the adenylate kinase family. In terms of assembly, monomer.

The protein resides in the cytoplasm. The enzyme catalyses AMP + ATP = 2 ADP. It participates in purine metabolism; AMP biosynthesis via salvage pathway; AMP from ADP: step 1/1. Its function is as follows. Catalyzes the reversible transfer of the terminal phosphate group between ATP and AMP. Plays an important role in cellular energy homeostasis and in adenine nucleotide metabolism. The polypeptide is Adenylate kinase (Helicobacter pylori (strain G27)).